The following is a 975-amino-acid chain: MASNNVAQFAAELKMPAGVLLEQLQAAGVQKASEDDALSETDKARLLDHLRKSHGATDGDKRKITLTRRHTSEIKQADATGKARTIQVEVRKKRTFVKRDDVSETGADQAQAQTDEQAEAELKRREEEARREAELLEKQAQELRERQERLEREEAERRAREEAAEAERRRAEEEAAAKRAAAAQAEAAQQAAAAREQAQRAQSEPAEQSAQDEARAAAERAAQREAAKKAEDAAREAADKARAEQEEIRKRREAAEAEARAIREMMNTPRRAQVKAVEPPKPAEPPAAKAAEAKGTLHKPAKPAGEAAAARPAAKKPASGAPAPAAAPAGDRTKKPGTGKSGWQDDAAKRRGIKTRGDSSGGVDRGWRGGPKGRGKHQDSASSFQAPTEPIVREVHVPETISVADLAHKMSIKASEVIKVMMKMGQMVTINQVLDQETAMIVVEELGHRALAAKLDDPEALLVEGEIGSDAEQLPRPPVVTVMGHVDHGKTSLLDYIRRAKVAAGEAGGITQHIGAYHVETPRGVVTFLDTPGHEAFTAMRARGAKATDIVILVVAADDGVMPQTKEAISHAKAGGVPIVVAINKIDKPEANPDRVKQELVAEGVVPEEYGGDSPFVPVSAKTGAGIDDLLENVLLQAEVLELKAPVESPAKGIVIEAKLDKGKGPVATVLVQSGTLSRGDVVLAGTAYGRVRAMLDENGKPTKEAGPSIPVEIQGLSEVPGAGEEVIVLPDERKAREIALFRQGKFRDVKLAKQQAAKLESMLEQMGEGEVQNLPLIIKADVQGSQEALVQSLLKLSTDEVRVQIVHSAVGGISESDVNLATASKAVIIGFNTRADAQARKLAEANGIDIRYYNIIYDAVDEVKAAMSGMLAPEKREVVTGMVEVRQVFKVPKVGTVAGCMVTDGVVKRSSSVRVLRNNVVIFTGELDSLKRFKDDVKEVKQGFECGMSLKNFNDIVEGDQFEVFEVTEVARTL.

Positions 48–63 (DHLRKSHGATDGDKRK) are enriched in basic and acidic residues. Disordered regions lie at residues 48-84 (DHLRKSHGATDGDKRKITLTRRHTSEIKQADATGKAR) and 96-388 (FVKR…QAPT). A compositionally biased stretch (low complexity) spans 104–115 (ETGADQAQAQTD). The segment covering 120–177 (AELKRREEEARREAELLEKQAQELRERQERLEREEAERRAREEAAEAERRRAEEEAAA) has biased composition (basic and acidic residues). Positions 178 to 211 (KRAAAAQAEAAQQAAAAREQAQRAQSEPAEQSAQ) are enriched in low complexity. Residues 212-263 (DEARAAAERAAQREAAKKAEDAAREAADKARAEQEEIRKRREAAEAEARAIR) show a composition bias toward basic and acidic residues. Positions 302–330 (KPAGEAAAARPAAKKPASGAPAPAAAPAG) are enriched in low complexity. Residues 359–372 (SSGGVDRGWRGGPK) are compositionally biased toward gly residues. Positions 475–644 (PRPPVVTVMG…LLQAEVLELK (170 aa)) constitute a tr-type G domain. The interval 484 to 491 (GHVDHGKT) is G1. 484 to 491 (GHVDHGKT) lines the GTP pocket. The tract at residues 509-513 (GITQH) is G2. The segment at 530–533 (DTPG) is G3. GTP-binding positions include 530 to 534 (DTPGH) and 584 to 587 (NKID). Residues 584 to 587 (NKID) are G4. The G5 stretch occupies residues 620–622 (SAK).

The protein belongs to the TRAFAC class translation factor GTPase superfamily. Classic translation factor GTPase family. IF-2 subfamily.

It localises to the cytoplasm. Functionally, one of the essential components for the initiation of protein synthesis. Protects formylmethionyl-tRNA from spontaneous hydrolysis and promotes its binding to the 30S ribosomal subunits. Also involved in the hydrolysis of GTP during the formation of the 70S ribosomal complex. This is Translation initiation factor IF-2 from Burkholderia pseudomallei (strain 1710b).